The chain runs to 488 residues: Diacylglycerol kinase 3 (488 aa).

The tract at residues 1–24 (MDSPVSKTDASKEKFVASRPSTAD) is disordered. Residues 87–245 (APHAPMVVFI…SWKILVSMPS (159 aa)) form the DAGKc domain.

It belongs to the eukaryotic diacylglycerol kinase family. In terms of assembly, monomer.

It carries out the reaction a 1,2-diacyl-sn-glycerol + ATP = a 1,2-diacyl-sn-glycero-3-phosphate + ADP + H(+). Its function is as follows. Phosphorylates the second messenger diacylglycerol (DAG) to generate phosphatidic acid (PA), another important signaling molecule. PA is required for plant development and responses to abiotic stress and pathogen attack. May be involved in the accumulation of PA during cold stress. This Arabidopsis thaliana (Mouse-ear cress) protein is Diacylglycerol kinase 3 (DGK3).